The sequence spans 301 residues: GTPase Era (301 aa).

The Era-type G domain occupies 6–173; that stretch reads KSGFVAIVGR…LEQTNANLEI (168 aa). Residues 14–21 form a G1 region; sequence GRPNVGKS. 14 to 21 serves as a coordination point for GTP; that stretch reads GRPNVGKS. The interval 40-44 is G2; that stretch reads QTTRN. Residues 61-64 form a G3 region; it reads DTPG. GTP-binding positions include 61–65 and 123–126; these read DTPGI and NKID. Residues 123–126 form a G4 region; it reads NKID. The interval 152–154 is G5; that stretch reads ISA. Positions 204-282 constitute a KH type-2 domain; that stretch reads TREEVPHSVA…FLEIWVKVQK (79 aa).

It belongs to the TRAFAC class TrmE-Era-EngA-EngB-Septin-like GTPase superfamily. Era GTPase family. In terms of assembly, monomer.

The protein resides in the cytoplasm. Its subcellular location is the cell membrane. Functionally, an essential GTPase that binds both GDP and GTP, with rapid nucleotide exchange. Plays a role in 16S rRNA processing and 30S ribosomal subunit biogenesis and possibly also in cell cycle regulation and energy metabolism. The polypeptide is GTPase Era (Listeria innocua serovar 6a (strain ATCC BAA-680 / CLIP 11262)).